The primary structure comprises 593 residues: Class E vacuolar protein-sorting machinery protein HSE1 (593 aa).

The VHS domain maps to 15-144 (ATSDELTSEN…SLKSQDAVAE (130 aa)). The segment at 136–251 (LKSQDAVAED…AQPLSAATPP (116 aa)) is disordered. A compositionally biased stretch (basic and acidic residues) spans 151–171 (PPREPTSEQLRAEDEELRRAL). The region spanning 162 to 181 (AEDEELRRALELSIQDQGGR) is the UIM domain. Over residues 175 to 193 (IQDQGGRNAWPSYNTEQAE) the composition is skewed to polar residues. Residues 194 to 227 (TSGSSAPAAASSSSSAYQPTSQSLAPAQQQQQQQ) show a composition bias toward low complexity. Positions 232 to 241 (HTNGTSSSAH) are enriched in polar residues. The SH3 domain maps to 252 to 311 (AVASRVRALYDFSPTEPGELAFSRGEVIRVLDSVYEHWWRGEVRGEAGIFPVNYVEVLPD). The tract at residues 474–593 (RHGYAQSAGA…SSYASHPTGH (120 aa)) is disordered. A compositionally biased stretch (polar residues) spans 504-521 (QQITMAHQQQPHEQQYSS). Over residues 523–539 (PHDDEKRRLFERARAES) the composition is skewed to basic and acidic residues. Positions 540 to 552 (EAFQQQHFQSQAH) are enriched in low complexity. Over residues 566 to 593 (PDASVLNQQMGNMNIGGSSSYASHPTGH) the composition is skewed to polar residues.

This sequence belongs to the STAM family. As to quaternary structure, component of the ESCRT-0 complex composed of HSE1 and VPS27.

The protein resides in the endosome membrane. Its function is as follows. Component of the ESCRT-0 complex which is the sorting receptor for ubiquitinated cargo proteins at the multivesicular body (MVB). This Mycosarcoma maydis (Corn smut fungus) protein is Class E vacuolar protein-sorting machinery protein HSE1 (HSE1).